A 296-amino-acid polypeptide reads, in one-letter code: Nucleotide-binding protein SUB0630 (296 aa).

13–20 (GMSGAGKT) is a binding site for ATP. Residue 63-66 (DMRS) participates in GTP binding.

It belongs to the RapZ-like family.

Displays ATPase and GTPase activities. This chain is Nucleotide-binding protein SUB0630, found in Streptococcus uberis (strain ATCC BAA-854 / 0140J).